Consider the following 196-residue polypeptide: SPRY domain-containing protein 7 (196 aa).

An N-acetylalanine modification is found at alanine 2. The region spanning 2–184 (AASAWCCLRC…FSEFYHTPPP (183 aa)) is the B30.2/SPRY domain.

In Mus musculus (Mouse), this protein is SPRY domain-containing protein 7 (Spryd7).